The sequence spans 621 residues: TOX high mobility group box family member 4 (621 aa).

Disordered regions lie at residues 153–227 (LGLS…QKPV) and 305–333 (LDPA…ASIE). Residue T176 is modified to Phosphothreonine. A phosphoserine mark is found at S178, S181, and S182. Positions 183–193 (LHEDGVEDFRR) are enriched in basic and acidic residues. Positions 208-218 (KQKAPKKRKKK) are enriched in basic residues. A Nuclear localization signal motif is present at residues 213 to 218 (KKRKKK). The segment at residues 223–291 (PQKPVSAYAL…EYLKALAAYK (69 aa)) is a DNA-binding region (HMG box). Residues 307-319 (PAPPSQTPSPPPM) show a composition bias toward pro residues. Phosphothreonine is present on T313. At S315 the chain carries Phosphoserine. A compositionally biased stretch (low complexity) spans 320–333 (ATVDPASPAPASIE). At R481 the chain carries Asymmetric dimethylarginine. The span at 510 to 525 (PTVESSPERPMNNSPE) shows a compositional bias: polar residues. The segment at 510–529 (PTVESSPERPMNNSPEAHTV) is disordered. 6 positions are modified to phosphoserine: S533, S550, S552, S560, S562, and S567.

As to quaternary structure, component of the PNUTS-PP1 phosphatase complex, composed of PPP1R10/PNUTS, TOX4, WDR82 and PPP1CA or PPP1CB or PPP1CC. Interacts with PPP1R10/PNUTS. Interacts with FOXO1 and CREB1 (increased by cAMP); FOXO1 and CREB1 are required for full induction of TOX4-dependent activity and the interactions are inhibited by insulin. Expressed in liver (at protein level).

The protein resides in the nucleus. It localises to the chromosome. With respect to regulation, in liver, recruited to target gene promoters following treatment with dexamethasone and cAMP. Binding is decreased in presence of insulin. Its function is as follows. Transcription factor that modulates cell fate reprogramming from the somatic state to the pluripotent and neuronal fate. In liver, controls the expression of hormone-regulated gluconeogenic genes such as G6PC1 and PCK1. This regulation is independent of the insulin receptor activation. Also acts as a regulatory component of protein phosphatase 1 (PP1) complexes. Component of the PNUTS-PP1 protein phosphatase complex, a PP1 complex that regulates RNA polymerase II transcription pause-release. PNUTS-PP1 also plays a role in the control of chromatin structure and cell cycle progression during the transition from mitosis into interphase. The sequence is that of TOX high mobility group box family member 4 from Homo sapiens (Human).